The chain runs to 296 residues: ADP-dependent (S)-NAD(P)H-hydrate dehydratase (296 aa).

One can recognise a YjeF C-terminal domain in the interval T18–I292. Residues A53, G113, and H165 each contribute to the (6S)-NADPHX site. Residues K202–T206 and G231 contribute to the AMP site. Residue D232 coordinates (6S)-NADPHX.

The protein belongs to the NnrD/CARKD family. Homotetramer. The cofactor is Mg(2+).

It catalyses the reaction (6S)-NADHX + ADP = AMP + phosphate + NADH + H(+). It carries out the reaction (6S)-NADPHX + ADP = AMP + phosphate + NADPH + H(+). Catalyzes the dehydration of the S-form of NAD(P)HX at the expense of ADP, which is converted to AMP. Together with NAD(P)HX epimerase, which catalyzes the epimerization of the S- and R-forms, the enzyme allows the repair of both epimers of NAD(P)HX, a damaged form of NAD(P)H that is a result of enzymatic or heat-dependent hydration. The chain is ADP-dependent (S)-NAD(P)H-hydrate dehydratase from Neisseria meningitidis serogroup B (strain ATCC BAA-335 / MC58).